Consider the following 218-residue polypeptide: Large ribosomal subunit protein uL3 (218 aa).

Positions 126–163 (HGFSRGPMTHGSKNHRQPGSIGAGTTPGRIYPGKRMSG) are disordered.

This sequence belongs to the universal ribosomal protein uL3 family. In terms of assembly, part of the 50S ribosomal subunit. Forms a cluster with proteins L14 and L19.

Its function is as follows. One of the primary rRNA binding proteins, it binds directly near the 3'-end of the 23S rRNA, where it nucleates assembly of the 50S subunit. The chain is Large ribosomal subunit protein uL3 from Synechococcus sp. (strain CC9311).